A 155-amino-acid polypeptide reads, in one-letter code: Small ribosomal subunit protein uS7 (155 aa).

This sequence belongs to the universal ribosomal protein uS7 family. As to quaternary structure, part of the 30S ribosomal subunit. Contacts proteins S9 and S11.

Its function is as follows. One of the primary rRNA binding proteins, it binds directly to 16S rRNA where it nucleates assembly of the head domain of the 30S subunit. Is located at the subunit interface close to the decoding center, probably blocks exit of the E-site tRNA. The chain is Small ribosomal subunit protein uS7 from Xanthomonas oryzae pv. oryzae (strain MAFF 311018).